A 216-amino-acid polypeptide reads, in one-letter code: Somatotropin (216 aa).

The signal sequence occupies residues 1–26 (MAADPQSSVLLAFALLCLPWPQEVGA). His-45 contributes to the Zn(2+) binding site. Cys-78 and Cys-189 form a disulfide bridge. Residue Ser-131 is modified to Phosphoserine. Glu-198 lines the Zn(2+) pocket. Cys-206 and Cys-214 are joined by a disulfide.

This sequence belongs to the somatotropin/prolactin family.

It localises to the secreted. In terms of biological role, plays an important role in growth control. Its major role in stimulating body growth is to stimulate the liver and other tissues to secrete IGF1. It stimulates both the differentiation and proliferation of myoblasts. It also stimulates amino acid uptake and protein synthesis in muscle and other tissues. This is Somatotropin (GH1) from Ailuropoda melanoleuca (Giant panda).